The chain runs to 156 residues: Small ribosomal subunit protein uS7 (156 aa).

It belongs to the universal ribosomal protein uS7 family. As to quaternary structure, part of the 30S ribosomal subunit. Contacts proteins S9 and S11.

In terms of biological role, one of the primary rRNA binding proteins, it binds directly to 16S rRNA where it nucleates assembly of the head domain of the 30S subunit. Is located at the subunit interface close to the decoding center, probably blocks exit of the E-site tRNA. This chain is Small ribosomal subunit protein uS7, found in Shewanella baltica (strain OS223).